A 622-amino-acid polypeptide reads, in one-letter code: MDENEDSSIAATMGFSGFGKKARTFDLEAMFEQTRRTAVERSKQTLEAREKEEQLSNKSPVIKGAPSSSGQKKTKASGSSSGSEDSSDDELIGPPLPPNVTGDHGDELIGPPLPPGYKDSDDEDDEEHEDDDNPVKDIPDSHEITLQHGTKTVSALGLDPSGARLVTGGYDYDVRFWDFAGMDASLQAFRSLQPCECHQIKSLQYSNTGDVILVVAGNSQAKVLDRDGFPVMECVKGDQYIVDMANTKGHTAMLNGGCWHPKIKEEFMTCSNDGTVRTWDVSNEKKHKGIFKPRSVQGKPVIPTCCTYSRDGKFIAAGCQDGSIQIWDRNMSVHTKFHCRQAHTPGTDTSCVTFSYGGNVLATRGGDDTLKTWDIRKFKNPLNVASGLENFFPMTDCCFSPDDKLLITGTSVKRGIGDGKLLFFDVVTFQKIYEIQVTEASVVRCLWHPKLNQIMVGTGNGLAKVYYDPNRSQRGAKLCVVKTQRKERQAETLTQDYIITPHALPMFREPRQRSTRKQLEKDRLDPVKSHKPEPPVAGPGRGGRVGTHGGTLSSFIVKNIALDKTDDSNAREAILRHAKDAEQNPYWVAPAYSKTQPNTVFAEVDSDEEEPDNEPEWKKRKI.

A compositionally biased stretch (basic and acidic residues) spans 36 to 55; that stretch reads RTAVERSKQTLEAREKEEQL. A disordered region spans residues 36-141; sequence RTAVERSKQT…DNPVKDIPDS (106 aa). The segment covering 67 to 84 has biased composition (low complexity); the sequence is SSSGQKKTKASGSSSGSE. Over residues 120-132 the composition is skewed to acidic residues; sequence SDDEDDEEHEDDD. WD repeat units follow at residues 148–187, 195–236, 249–289, 298–337, 344–383, 387–434, and 437–476; these read HGTKTVSALGLDPSGARLVTGGYDYDVRFWDFAGMDASLQ, CECH…ECVK, GHTA…KHKG, GKPVIPTCCTYSRDGKFIAAGCQDGSIQIWDRNMSVHTKF, TPGTDTSCVTFSYGGNVLATRGGDDTLKTWDIRKFKNPLN, GLEN…KIYE, and VTEASVVRCLWHPKLNQIMVGTGNGLAKVYYDPNRSQRGA. The segment covering 508–533 has biased composition (basic and acidic residues); it reads REPRQRSTRKQLEKDRLDPVKSHKPE. 2 disordered regions span residues 508–549 and 602–622; these read REPR…GTHG and AEVDSDEEEPDNEPEWKKRKI. The span at 539 to 549 shows a compositional bias: gly residues; the sequence is PGRGGRVGTHG. Over residues 604–614 the composition is skewed to acidic residues; sequence VDSDEEEPDNE.

This sequence belongs to the WD repeat GAD-1 family.

This chain is WD repeat-containing protein 70 (wdr70), found in Xenopus laevis (African clawed frog).